We begin with the raw amino-acid sequence, 842 residues long: Oligopeptide transporter phomP2' (842 aa).

The segment at 1 to 58 is disordered; sequence MEADPKVPFTDEMNIQDEHNWESGSWSSSRRSNDSNVTLLSRRSSVEQHEDERQKDSD. Low complexity predominate over residues 23–36; sequence SGSWSSSRRSNDSN. 2 N-linked (GlcNAc...) asparagine glycosylation sites follow: asparagine 33 and asparagine 36. The span at 44-58 shows a compositional bias: basic and acidic residues; sequence SSVEQHEDERQKDSD. The next 6 helical transmembrane spans lie at 105–125, 177–197, 210–230, 268–288, 315–335, and 345–365; these read VWLL…VYYF, ALVV…GPLS, PWAI…VGLY, VFMA…FVFP, GFGL…SPLF, and FVGA…SDAL. Asparagine 386 and asparagine 398 each carry an N-linked (GlcNAc...) asparagine glycan. 4 helical membrane-spanning segments follow: residues 415–435, 478–498, 505–525, and 585–605; these read AMHF…AVLF, AWYA…LYAG, WGLQ…GMLF, and WELL…NWAV. Positions 629–649 are enriched in gly residues; it reads QGLGLGQGGGGGGGGGGGGGQ. The tract at residues 629-657 is disordered; it reads QGLGLGQGGGGGGGGGGGGGQQQRAAGAH. 3 helical membrane-spanning segments follow: residues 668 to 688, 700 to 720, and 731 to 751; these read NFFS…FGGG, WLLP…WLIH, and WPLH…FPTT. An N-linked (GlcNAc...) asparagine glycan is attached at asparagine 752. A helical transmembrane segment spans residues 784 to 804; the sequence is AGLDCGAQLVQMVLGLAFLVF.

It belongs to the oligopeptide OPT transporter family.

The protein localises to the membrane. Its function is as follows. Oligopeptide transporter; part of the gene cluster that mediates the biosynthesis of the phomopsins, a group of hexapeptide mycotoxins which infects lupins and causes lupinosis disease in livestock. This is Oligopeptide transporter phomP2' from Diaporthe leptostromiformis (Lupinosis disease fungus).